A 547-amino-acid polypeptide reads, in one-letter code: Intercellular adhesion molecule 3 (547 aa).

Positions 1–29 (MATMVPSVLWPRACWTLLVCCLLTPGVQG) are cleaved as a signal peptide. Over 30 to 485 (QEFLLRVEPQ…VMDIEAGSSH (456 aa)) the chain is Extracellular. The 58-residue stretch at 46 to 103 (GGSLFVNCSTDCPSSEKIALETSLSKELVASGMGWAAFNLSNVTGNSRILCSVYCNGS) folds into the Ig-like C2-type 1 domain. 6 N-linked (GlcNAc...) asparagine glycosylation sites follow: N52, N84, N87, N101, N110, and N134. 2 disulfides stabilise this stretch: C53/C96 and C57/C100. One can recognise an Ig-like C2-type 2 domain in the interval 132 to 197 (GQNFTLRCQV…FSCRTELDMQ (66 aa)). A disulfide bond links C139 and C190. N206, N264, N295, N308, N320, N363, N389, N453, and N457 each carry an N-linked (GlcNAc...) asparagine glycan. The Ig-like C2-type 3 domain occupies 234–301 (ETSWPVDCTL…IVCNVTLGGE (68 aa)). A disulfide bond links C241 and C294. The region spanning 329-382 (GSTVTVSCMAGARVQVTLDGVPAAAPGQPAQLQLNATESDDGRSFFCSATLEVD) is the Ig-like C2-type 4 domain. C336 and C375 are oxidised to a cystine. The Ig-like C2-type 5 domain occupies 416 to 469 (KTRHVLQCQARGNPYPELRCLKEGSSREVPVGIPFFVNVTHNGTYQCQASSSRG). Cysteines 423 and 462 form a disulfide. The chain crosses the membrane as a helical span at residues 486-510 (FVPVFVAVLLTLGVVTIVLALMYVF). At 511–547 (REHQRSGSYHVREESTYLPLTSMQPTEAMGEEPSRAE) the chain is on the cytoplasmic side.

The protein belongs to the immunoglobulin superfamily. ICAM family. Interacts with moesin/MSN. In terms of processing, upon stimulation by a physiologic stimuli becomes rapidly and transiently phosphorylated on serine residues. N-glycosylated; glycans consist of a mixture of tri- and tetra-antennary complex-type chains and high-mannose chains. As to expression, leukocytes.

The protein resides in the membrane. Functionally, ICAM proteins are ligands for the leukocyte adhesion protein LFA-1 (integrin alpha-L/beta-2). ICAM3 is also a ligand for integrin alpha-D/beta-2. In association with integrin alpha-L/beta-2, contributes to apoptotic neutrophil phagocytosis by macrophages. The sequence is that of Intercellular adhesion molecule 3 (ICAM3) from Homo sapiens (Human).